A 461-amino-acid chain; its full sequence is Pyruvate kinase (461 aa).

Arginine 46 is a substrate binding site. Residues asparagine 48 and aspartate 80 each coordinate K(+). 48-51 (NLAH) serves as a coordination point for ATP. ATP-binding residues include arginine 87 and lysine 165. A Mg(2+)-binding site is contributed by glutamate 232. The substrate site is built by glycine 255, aspartate 256, and threonine 288. Aspartate 256 is a binding site for Mg(2+).

Belongs to the pyruvate kinase family. In terms of assembly, homotetramer. The cofactor is a divalent metal cation.

The enzyme catalyses pyruvate + ATP = phosphoenolpyruvate + ADP + H(+). The protein operates within carbohydrate degradation; glycolysis; pyruvate from D-glyceraldehyde 3-phosphate: step 5/5. With respect to regulation, not activated by classical allosteric effectors. The sequence is that of Pyruvate kinase (pyk) from Pyrobaculum aerophilum (strain ATCC 51768 / DSM 7523 / JCM 9630 / CIP 104966 / NBRC 100827 / IM2).